Here is a 178-residue protein sequence, read N- to C-terminus: uncharacterized protein (178 aa).

2 consecutive transmembrane segments (helical) span residues 6 to 26 (AIFGLLSVIFVIMAISQVSGL) and 154 to 174 (KELVITAVLIISILGLGAMLI).

The protein localises to the cell membrane. This is an uncharacterized protein from Methanocaldococcus jannaschii (strain ATCC 43067 / DSM 2661 / JAL-1 / JCM 10045 / NBRC 100440) (Methanococcus jannaschii).